We begin with the raw amino-acid sequence, 51 residues long: uncharacterized protein (51 aa).

This is an uncharacterized protein from Escherichia coli (strain K12).